A 150-amino-acid polypeptide reads, in one-letter code: Monothiol glutaredoxin-S13 (150 aa).

Positions 30 to 52 (PSSSSSSLSWLTSGSPKPTSISN) are disordered. The span at 31–44 (SSSSSSLSWLTSGS) shows a compositional bias: low complexity. Residues 53-149 (KRSSNLVVME…PTLRQAGALW (97 aa)) enclose the Glutaredoxin domain. Cys-73 is a [2Fe-2S] cluster binding site. The Responsive for interaction with TGA factors motif lies at 147–150 (ALWL).

This sequence belongs to the glutaredoxin family. CC-type subfamily.

It localises to the cytoplasm. Its subcellular location is the nucleus. Its function is as follows. May only reduce GSH-thiol disulfides, but not protein disulfides. The polypeptide is Monothiol glutaredoxin-S13 (GRXS13) (Arabidopsis thaliana (Mouse-ear cress)).